The sequence spans 349 residues: Peroxidase C3 (349 aa).

The N-terminal stretch at 1 to 29 (MGFSPLISCSAMGALILSCLLLQASNSNA) is a signal peptide. 4 disulfide bridges follow: C40-C120, C73-C78, C126-C329, and C206-C238. The active-site Proton acceptor is H71. Residues D72, V75, G77, D79, and S81 each contribute to the Ca(2+) site. N-linked (GlcNAc...) asparagine glycosylation is present at N86. Residue P168 coordinates substrate. Heme b is bound at residue H199. T200 lines the Ca(2+) pocket. 2 N-linked (GlcNAc...) asparagine glycosylation sites follow: N217 and N243. D251, T254, and D259 together coordinate Ca(2+).

Belongs to the peroxidase family. Classical plant (class III) peroxidase subfamily. Requires Ca(2+) as cofactor. The cofactor is heme b.

It is found in the secreted. The protein localises to the vacuole. The catalysed reaction is 2 a phenolic donor + H2O2 = 2 a phenolic radical donor + 2 H2O. Functionally, removal of H(2)O(2), oxidation of toxic reductants, biosynthesis and degradation of lignin, suberization, auxin catabolism, response to environmental stresses such as wounding, pathogen attack and oxidative stress. These functions might be dependent on each isozyme/isoform in each plant tissue. The sequence is that of Peroxidase C3 (PRXC3) from Armoracia rusticana (Horseradish).